Here is a 319-residue protein sequence, read N- to C-terminus: Free fatty acid receptor 3 (319 aa).

At 1–15 (MDTSFFPGNHWLFFS) the chain is on the extracellular side. The chain crosses the membrane as a helical span at residues 16–36 (VDLLVFLVGLPLNVMALVVFV). Over 37-43 (NKLRRRP) the chain is Cytoplasmic. Residues 44–64 (VAVDLLLLNLTISDLLLLLFL) traverse the membrane as a helical segment. Residues 65 to 98 (PFRIVEAACGMKWILPFIFCPLSGFLFFTTIYLT) are Extracellular-facing. A disulfide bond links Cys-84 and Cys-165. Residues 99 to 119 (SLFLMTVSIERFLSVAYPLWY) form a helical membrane-spanning segment. At 120–127 (KTRPRLAQ) the chain is on the cytoplasmic side. A helical membrane pass occupies residues 128–148 (AGLVSGICWFLASAHCSVIYV). Over 149 to 183 (TEYWGNATYSQGTNGTCYLEFREDQLAILLPVRLE) the chain is Extracellular. Residues 184 to 206 (MAVVLFMVPLCITSYCYSRLVWI) traverse the membrane as a helical segment. The Cytoplasmic portion of the chain corresponds to 207 to 218 (LSQGASRRRRKR). The chain crosses the membrane as a helical span at residues 219-239 (VMGLLVATLLIFFVCFGPYNM). The Extracellular portion of the chain corresponds to 240-254 (SHVVGYVRGESPTWR). A helical membrane pass occupies residues 255–275 (SYVLLLSTLNSCIDPLVFYFS). At 276–319 (SSKFQADFHQLLSRLIRACVPWTQEVSLELKVKNGEEPSKECPS) the chain is on the cytoplasmic side.

This sequence belongs to the G-protein coupled receptor 1 family. Expressed in the sympathetic nervous system.

The protein resides in the cell membrane. G protein-coupled receptor that is activated by a major product of dietary fiber digestion, the short chain fatty acids (SCFAs), and that plays a role in the regulation of whole-body energy homeostasis and in intestinal immunity. In omnivorous mammals, the short chain fatty acids acetate, propionate and butyrate are produced primarily by the gut microbiome that metabolizes dietary fibers. SCFAs serve as a source of energy but also act as signaling molecules. That G protein-coupled receptor is probably coupled to the pertussis toxin-sensitive, G(i/o)-alpha family of G proteins. Its activation results in the formation of inositol 1,4,5-trisphosphate, the mobilization of intracellular calcium, the phosphorylation of the MAPK3/ERK1 and MAPK1/ERK2 kinases and the inhibition of intracellular cAMP accumulation. Activated by SCFAs and by beta-hydroxybutyrate, a ketone body produced by the liver upon starvation, it inhibits N-type calcium channels and modulates the activity of sympathetic neurons through a signaling cascade involving the beta and gamma subunits of its coupled G protein, phospholipase C and MAP kinases. Thereby, it may regulate energy expenditure through the control of the sympathetic nervous system that controls for instance heart rate. Upon activation by SCFAs accumulating in the intestine, it may also signal to the brain via neural circuits which in turn would regulate intestinal gluconeogenesis. May also control the production of hormones involved in whole-body energy homeostasis. May for instance, regulate blood pressure through renin secretion. May also regulate secretion of the PYY peptide by enteroendocrine cells and control gut motility, intestinal transit rate, and the harvesting of energy from SCFAs produced by gut microbiota. May also indirectly regulate the production of LEP/Leptin, a hormone acting on the CNS to inhibit food intake, in response to the presence of short-chain fatty acids in the intestine. Finally, may also play a role in glucose homeostasis. Besides its role in energy homeostasis, may play a role in intestinal immunity. May mediate the activation of the inflammatory and immune response by SCFAs in the gut, regulating the rapid production of chemokines and cytokines by intestinal epithelial cells. The sequence is that of Free fatty acid receptor 3 (Ffar3) from Rattus norvegicus (Rat).